A 334-amino-acid chain; its full sequence is Retinol dehydrogenase 14 (334 aa).

51–57 is a binding site for NADP(+); that stretch reads GANSGLG. A substrate-binding site is contributed by S190. Y215 serves as the catalytic Proton acceptor.

Belongs to the short-chain dehydrogenases/reductases (SDR) family.

The enzyme catalyses all-trans-retinol + NADP(+) = all-trans-retinal + NADPH + H(+). The catalysed reaction is 11-cis-retinol + NADP(+) = 11-cis-retinal + NADPH + H(+). It carries out the reaction 9-cis-retinol + NADP(+) = 9-cis-retinal + NADPH + H(+). Its function is as follows. Retinol dehydrogenase with a clear preference for NADP. Displays high activity towards 9-cis, 11-cis and all-trans-retinol. Shows a very weak activity towards 13-cis-retinol. Has no activity towards steroids. This is Retinol dehydrogenase 14 (Rdh14) from Mus musculus (Mouse).